The chain runs to 216 residues: Pyrophosphatase PpaX (216 aa).

Catalysis depends on Asp12, which acts as the Nucleophile.

The protein belongs to the HAD-like hydrolase superfamily. PpaX family. Mg(2+) is required as a cofactor.

The enzyme catalyses diphosphate + H2O = 2 phosphate + H(+). Functionally, hydrolyzes pyrophosphate formed during P-Ser-HPr dephosphorylation by HPrK/P. Might play a role in controlling the intracellular pyrophosphate pool. The protein is Pyrophosphatase PpaX of Bacillus pumilus (strain SAFR-032).